We begin with the raw amino-acid sequence, 816 residues long: H(+)/Cl(-) exchange transporter 5 (816 aa).

At methionine 1–alanine 124 the chain is on the cytoplasmic side. The next 2 membrane-spanning stretches (helical) occupy residues phenylalanine 125–glycine 162 and valine 208–phenylalanine 231. Positions glycine 237–proline 241 match the Selectivity filter part_1 motif. Serine 238 contacts chloride. Positions isoleucine 240 to leucine 247 form an intramembrane region, helical. The next 2 helical transmembrane spans lie at leucine 256–glycine 275 and glutamate 281–asparagine 300. A Selectivity filter part_2 motif is present at residues glycine 279–proline 283. 2 consecutive intramembrane regions (helical) follow at residues valine 312–alanine 324 and proline 328–leucine 336. The next 5 helical transmembrane spans lie at leucine 348–asparagine 366, leucine 389–cysteine 414, leucine 422–phenylalanine 442, methionine 498–methionine 518, and glycine 523–glycine 542. A Selectivity filter part_3 motif is present at residues glycine 523 to proline 527. Phenylalanine 525 lines the chloride pocket. Positions glycine 570–valine 584 form an intramembrane region, helical. The segment at residues threonine 585–methionine 587 is an intramembrane region (note=Loop between two helices). The segment at residues threonine 588 to threonine 599 is an intramembrane region (helical). Positions glycine 600–tyrosine 604 form an intramembrane region, note=Loop between two helices. A helical transmembrane segment spans residues isoleucine 605–leucine 622. At glycine 623–asparagine 816 the chain is on the cytoplasmic side. Tyrosine 628 is a binding site for chloride. CBS domains are found at residues methionine 656–lysine 720 and isoleucine 752–serine 812. Residues threonine 666, tyrosine 687–glycine 689, and threonine 794–aspartate 797 contribute to the ATP site.

The protein belongs to the chloride channel (TC 2.A.49) family. ClC-5/CLCN5 subfamily. As to quaternary structure, interacts with NEDD4 and NEDD4L. In terms of processing, ubiquitinated by NEDD4L in the presence of albumin; which promotes endocytosis and proteasomal degradation.

It is found in the golgi apparatus membrane. The protein localises to the endosome membrane. It localises to the cell membrane. It carries out the reaction 2 chloride(in) + H(+)(out) = 2 chloride(out) + H(+)(in). Functionally, proton-coupled chloride transporter. Functions as antiport system and exchanges chloride ions against protons. Important for normal acidification of the endosome lumen. May play an important role in renal tubular function. The CLC channel family contains both chloride channels and proton-coupled anion transporters that exchange chloride or another anion for protons. The absence of conserved gating glutamate residues is typical for family members that function as channels. The chain is H(+)/Cl(-) exchange transporter 5 (CLCN5) from Oryctolagus cuniculus (Rabbit).